Consider the following 365-residue polypeptide: Histidinol-phosphate aminotransferase (365 aa).

The segment at 1–22 (MSRPVPNPGILDIAPYTPGKSP) is disordered. N6-(pyridoxal phosphate)lysine is present on Lys-221.

It belongs to the class-II pyridoxal-phosphate-dependent aminotransferase family. Histidinol-phosphate aminotransferase subfamily. Homodimer. It depends on pyridoxal 5'-phosphate as a cofactor.

It carries out the reaction L-histidinol phosphate + 2-oxoglutarate = 3-(imidazol-4-yl)-2-oxopropyl phosphate + L-glutamate. It functions in the pathway amino-acid biosynthesis; L-histidine biosynthesis; L-histidine from 5-phospho-alpha-D-ribose 1-diphosphate: step 7/9. This chain is Histidinol-phosphate aminotransferase, found in Rhodopseudomonas palustris (strain BisA53).